A 200-amino-acid polypeptide reads, in one-letter code: NAD(P)H dehydrogenase (quinone) (200 aa).

The 188-residue stretch at V4–V191 folds into the Flavodoxin-like domain. Residues S10 to V15 and T79 to F81 contribute to the FMN site. Y12 is an NAD(+) binding site. W99 serves as a coordination point for substrate. Residues S114 to G120 and H135 each bind FMN.

It belongs to the WrbA family. FMN is required as a cofactor.

It catalyses the reaction a quinone + NADH + H(+) = a quinol + NAD(+). The enzyme catalyses a quinone + NADPH + H(+) = a quinol + NADP(+). The chain is NAD(P)H dehydrogenase (quinone) from Burkholderia cenocepacia (strain HI2424).